A 167-amino-acid polypeptide reads, in one-letter code: NADH-ubiquinone oxidoreductase chain 6 (167 aa).

The next 5 helical transmembrane spans lie at 1-21 (MKMMVVFLFSILLVFGFVAFA), 27-47 (VYGGLSLVVSGGLGCAIVVSL), 50-70 (VFLGLIVFLIYLGGMLVVFGY), 88-108 (VALSMLLFTVIVESAWYLMSG), and 143-163 (WALVLLGWILFITIYVVLEVV).

The protein belongs to the complex I subunit 6 family. As to quaternary structure, core subunit of respiratory chain NADH dehydrogenase (Complex I) which is composed of 45 different subunits.

Its subcellular location is the mitochondrion inner membrane. The catalysed reaction is a ubiquinone + NADH + 5 H(+)(in) = a ubiquinol + NAD(+) + 4 H(+)(out). Its function is as follows. Core subunit of the mitochondrial membrane respiratory chain NADH dehydrogenase (Complex I) which catalyzes electron transfer from NADH through the respiratory chain, using ubiquinone as an electron acceptor. Essential for the catalytic activity and assembly of complex I. In Osphranter robustus (Wallaroo), this protein is NADH-ubiquinone oxidoreductase chain 6 (MT-ND6).